The sequence spans 139 residues: Large ribosomal subunit protein uL16 (139 aa).

The segment covering 1 to 19 (MLIPRRVKYRKQHHPKRTG) has biased composition (basic residues). Positions 1–23 (MLIPRRVKYRKQHHPKRTGAAKG) are disordered.

It belongs to the universal ribosomal protein uL16 family. Part of the 50S ribosomal subunit.

Its function is as follows. Binds 23S rRNA and is also seen to make contacts with the A and possibly P site tRNAs. This chain is Large ribosomal subunit protein uL16, found in Cutibacterium acnes (strain DSM 16379 / KPA171202) (Propionibacterium acnes).